The following is a 285-amino-acid chain: 2,3,4,5-tetrahydropyridine-2,6-dicarboxylate N-succinyltransferase (285 aa).

Residues R111 and D148 each contribute to the substrate site.

It belongs to the transferase hexapeptide repeat family. As to quaternary structure, homotrimer.

It is found in the cytoplasm. The catalysed reaction is (S)-2,3,4,5-tetrahydrodipicolinate + succinyl-CoA + H2O = (S)-2-succinylamino-6-oxoheptanedioate + CoA. It functions in the pathway amino-acid biosynthesis; L-lysine biosynthesis via DAP pathway; LL-2,6-diaminopimelate from (S)-tetrahydrodipicolinate (succinylase route): step 1/3. The polypeptide is 2,3,4,5-tetrahydropyridine-2,6-dicarboxylate N-succinyltransferase (Allorhizobium ampelinum (strain ATCC BAA-846 / DSM 112012 / S4) (Agrobacterium vitis (strain S4))).